A 330-amino-acid polypeptide reads, in one-letter code: PTS system mannose-specific EIIAB component (330 aa).

Residues 2–130 form the PTS EIIA type-4 domain; the sequence is GIGIIIASHG…NIIKESKDGI (129 aa). H10 acts as the Tele-phosphohistidine intermediate; for EIIA activity in catalysis. H10 carries the post-translational modification Phosphohistidine; by HPr. Residues 143–161 are hinge; it reads TAATEKVVNALQGAIPAGT. Residues 166–330 form the PTS EIIB type-4 domain; it reads GKLKINLARV…FELIQKANIK (165 aa). H181 serves as the catalytic Pros-phosphohistidine intermediate; for EIIB activity. Phosphohistidine; by EIIA is present on H181.

Homodimer.

It is found in the cytoplasm. It localises to the cell membrane. It carries out the reaction D-mannose(out) + N(pros)-phospho-L-histidyl-[protein] = D-mannose 6-phosphate(in) + L-histidyl-[protein]. Its function is as follows. The phosphoenolpyruvate-dependent sugar phosphotransferase system (sugar PTS), a major carbohydrate active transport system, catalyzes the phosphorylation of incoming sugar substrates concomitantly with their translocation across the cell membrane. The enzyme II ManXYZ PTS system is involved in mannose transport. In Streptococcus pyogenes serotype M6 (strain ATCC BAA-946 / MGAS10394), this protein is PTS system mannose-specific EIIAB component.